Consider the following 318-residue polypeptide: Annexin D6 (318 aa).

The residue at position 2 (Ala2) is an N-acetylalanine. 4 Annexin repeats span residues 11–82, 83–154, 168–239, and 243–314; these read PLPE…LWTL, DPTE…PLVS, KLAR…TAIK, and YPEK…ALLG. Ca(2+)-binding residues include Phe24, Gly26, Gly28, and Glu68. Ser95 is subject to Phosphoserine. Residues Thr100 and Thr112 each carry the phosphothreonine modification. Position 129 is a phosphotyrosine (Tyr129). Ca(2+)-binding residues include Ile256, Arg258, and Gly260. Residue Tyr285 is modified to Phosphotyrosine. Ser290 is modified (phosphoserine). Ca(2+)-binding residues include Asp300 and Thr301.

Belongs to the annexin (TC 1.A.31.1) family. Expressed in flowers.

The chain is Annexin D6 (ANN6) from Arabidopsis thaliana (Mouse-ear cress).